The following is a 476-amino-acid chain: Probable isoprenylcysteine alpha-carbonyl methylesterase ICMEL1 (476 aa).

The segment covering 92-104 has biased composition (polar residues); sequence NCLSAFSDDTNGT. A disordered region spans residues 92 to 116; it reads NCLSAFSDDTNGTADGGNNSGDRQT. 2 consecutive transmembrane segments (helical) span residues 153–173 and 208–228; these read FMALGCYAFLLMPGFIQVGYY and VVAFVTGGAWIIGYKAWGSLL. Substrate is bound by residues 214–216 and 285–287; these read GGA and QSA. Active-site residues include Ser286, Asp388, and His420.

Belongs to the AB hydrolase superfamily. Isoprenylcysteine methylesterase family. In terms of tissue distribution, expressed in roots, rosette and cauline leaves, stems, flowers and siliques.

It localises to the endoplasmic reticulum membrane. The protein localises to the golgi apparatus membrane. The catalysed reaction is [protein]-C-terminal S-[(2E,6E)-farnesyl]-L-cysteine methyl ester + H2O = [protein]-C-terminal S-[(2E,6E)-farnesyl]-L-cysteine + methanol + H(+). Its function is as follows. Catalyzes the demethylation of isoprenylcysteine methylesters. May be involved in the regulation of ABA signaling. The sequence is that of Probable isoprenylcysteine alpha-carbonyl methylesterase ICMEL1 from Arabidopsis thaliana (Mouse-ear cress).